A 380-amino-acid polypeptide reads, in one-letter code: 3-methylitaconate isomerase (380 aa).

Belongs to the PrpF family. As to quaternary structure, homotetramer.

The catalysed reaction is 2-methylene-3-methylsuccinate = dimethylmaleate. The protein operates within cofactor degradation; nicotinate degradation; propanoate and pyruvate from 6-hydroxynicotinate: step 6/8. With respect to regulation, inhibited by oxidized glutathione, p-chloromercuriphenylsulfonic acid and iodoacetic acid. Not inhibited by the chelating agent alpha,alpha-dipyridyl. Activity is slightly increased by EDTA. Not activated by Fe(2+), Mg(2+), Mn(2+) or Ca(2+). Unaffected by K(+), Na(+), NH4(+), Rb(+) or Li(+). Functionally, catalyzes the reversible isomerization of (R)-3-methylitaconate to 2,3-dimethylmaleate. Has very low isomerase activity with itaconate. This chain is 3-methylitaconate isomerase (mii), found in Eubacterium barkeri (Clostridium barkeri).